A 276-amino-acid chain; its full sequence is MSQAALNTRNSEEEVSSRRNNGTRLAGILFLLTVLTTVLVSGWVVLGWMEDAQRLPLSKLVLTGERHYTRNDDIRQSILALGEPGTFMTQDVNIIQTQIEQRLPWIKQVSVRKQWPDELKIHLVEYVPIARWNDQHMVDAEGNTFSVPPERTSKQVLPMLYGPEGSANEVLQGYREMGQMLAKDRFTLKEAAMTARRSWQLTLNNDIKLNLGRGDTMKRLARFVELYPVLQQQAQTDGKRISYVDLRYDSGAAVGWAPLPPEESTQQQNQAQAEQQ.

Residues 1–27 (MSQAALNTRNSEEEVSSRRNNGTRLAG) lie on the Cytoplasmic side of the membrane. Residues 28–48 (ILFLLTVLTTVLVSGWVVLGW) traverse the membrane as a helical segment. At 49 to 276 (MEDAQRLPLS…QQNQAQAEQQ (228 aa)) the chain is on the periplasmic side. A POTRA domain is found at 55 to 126 (LPLSKLVLTG…DELKIHLVEY (72 aa)). The disordered stretch occupies residues 255 to 276 (GWAPLPPEESTQQQNQAQAEQQ). The span at 266-276 (QQQNQAQAEQQ) shows a compositional bias: low complexity.

Belongs to the FtsQ/DivIB family. FtsQ subfamily. In terms of assembly, part of a complex composed of FtsB, FtsL and FtsQ. The complex can be formed before its localization to the division site. This tripartite complex can be divided further into a subcomplex of FtsB and FtsL, which forms in the absence of FtsQ. Interacts with FtsA, FtsK, FtsL, FtsB, FtsW, FtsI, FtsN, FtsX and YmgF.

Its subcellular location is the cell inner membrane. Essential cell division protein. May link together the upstream cell division proteins, which are predominantly cytoplasmic, with the downstream cell division proteins, which are predominantly periplasmic. May control correct divisome assembly. In Escherichia coli (strain K12), this protein is Cell division protein FtsQ.